The following is a 231-amino-acid chain: uncharacterized protein (231 aa).

Residue 10-34 (IITGASSGIGAATAKALEKQGVKVV) coordinates NADP(+). Ser-140 is a substrate binding site. Tyr-153 (proton acceptor) is an active-site residue.

The protein belongs to the short-chain dehydrogenases/reductases (SDR) family.

This is an uncharacterized protein from Staphylococcus haemolyticus (strain JCSC1435).